The sequence spans 652 residues: Acetolactate synthase 3, chloroplastic (652 aa).

Positions 1–20 (MAAATSSSPISLTAKPSSKS) are enriched in polar residues. The tract at residues 1–23 (MAAATSSSPISLTAKPSSKSPLP) is disordered. The transit peptide at 1–69 (MAAATSSSPI…PEKTDKIKTF (69 aa)) directs the protein to the chloroplast. Glu-126 provides a ligand contact to thiamine diphosphate. FAD contacts are provided by residues Arg-228, 334-355 (HGTVYANYAVEHSDLLLAFGVR), and 377-396 (DIDSAEIGKNKTPHVSVCGD). The interval 469–549 (QHQMWAAQFY…VKILLLNNQH (81 aa)) is thiamine pyrophosphate binding. Asp-520 and Asn-547 together coordinate Mg(2+).

This sequence belongs to the TPP enzyme family. The cofactor is Mg(2+). Thiamine diphosphate serves as cofactor.

The protein resides in the plastid. The protein localises to the chloroplast. The enzyme catalyses 2 pyruvate + H(+) = (2S)-2-acetolactate + CO2. The protein operates within amino-acid biosynthesis; L-isoleucine biosynthesis; L-isoleucine from 2-oxobutanoate: step 1/4. It functions in the pathway amino-acid biosynthesis; L-valine biosynthesis; L-valine from pyruvate: step 1/4. The protein is Acetolactate synthase 3, chloroplastic of Brassica napus (Rape).